We begin with the raw amino-acid sequence, 250 residues long: Ribosomal RNA small subunit methyltransferase J (250 aa).

Residues 101-102, 117-118, 153-154, and D171 each bind S-adenosyl-L-methionine; these read RD, ER, and SS.

The protein belongs to the methyltransferase superfamily. RsmJ family.

Its subcellular location is the cytoplasm. The enzyme catalyses guanosine(1516) in 16S rRNA + S-adenosyl-L-methionine = N(2)-methylguanosine(1516) in 16S rRNA + S-adenosyl-L-homocysteine + H(+). Its function is as follows. Specifically methylates the guanosine in position 1516 of 16S rRNA. The protein is Ribosomal RNA small subunit methyltransferase J of Escherichia fergusonii (strain ATCC 35469 / DSM 13698 / CCUG 18766 / IAM 14443 / JCM 21226 / LMG 7866 / NBRC 102419 / NCTC 12128 / CDC 0568-73).